A 91-amino-acid polypeptide reads, in one-letter code: MPRSLKKGPFIDLHLLKKVEAAVEKNDRKPVKTWSRRSMILPQMVGLTIAVHNGRQHVPVLVNEDMVGHKLGEFAGTRTYRGHVADKKGKR.

This sequence belongs to the universal ribosomal protein uS19 family.

Functionally, protein S19 forms a complex with S13 that binds strongly to the 16S ribosomal RNA. This chain is Small ribosomal subunit protein uS19, found in Ectopseudomonas mendocina (strain ymp) (Pseudomonas mendocina).